The chain runs to 449 residues: Phosphoglucosamine mutase (449 aa).

The active-site Phosphoserine intermediate is Ser-104. Mg(2+) contacts are provided by Ser-104, Asp-243, Asp-245, and Asp-247. Ser-104 is subject to Phosphoserine.

It belongs to the phosphohexose mutase family. Mg(2+) serves as cofactor. Post-translationally, activated by phosphorylation.

It catalyses the reaction alpha-D-glucosamine 1-phosphate = D-glucosamine 6-phosphate. Functionally, catalyzes the conversion of glucosamine-6-phosphate to glucosamine-1-phosphate. This is Phosphoglucosamine mutase from Xanthomonas axonopodis pv. citri (strain 306).